Consider the following 184-residue polypeptide: Ribosome-recycling factor (184 aa).

Belongs to the RRF family.

The protein localises to the cytoplasm. Functionally, responsible for the release of ribosomes from messenger RNA at the termination of protein biosynthesis. May increase the efficiency of translation by recycling ribosomes from one round of translation to another. This Acinetobacter baumannii (strain AB307-0294) protein is Ribosome-recycling factor.